Consider the following 388-residue polypeptide: NADH-quinone oxidoreductase subunit D 2 (388 aa).

Belongs to the complex I 49 kDa subunit family. In terms of assembly, NDH-1 is composed of 14 different subunits. Subunits NuoB, C, D, E, F, and G constitute the peripheral sector of the complex.

Its subcellular location is the cell membrane. It catalyses the reaction a quinone + NADH + 5 H(+)(in) = a quinol + NAD(+) + 4 H(+)(out). Functionally, NDH-1 shuttles electrons from NADH, via FMN and iron-sulfur (Fe-S) centers, to quinones in the respiratory chain. The immediate electron acceptor for the enzyme in this species is believed to be a menaquinone. Couples the redox reaction to proton translocation (for every two electrons transferred, four hydrogen ions are translocated across the cytoplasmic membrane), and thus conserves the redox energy in a proton gradient. This is NADH-quinone oxidoreductase subunit D 2 from Salinispora tropica (strain ATCC BAA-916 / DSM 44818 / JCM 13857 / NBRC 105044 / CNB-440).